Here is a 1012-residue protein sequence, read N- to C-terminus: AP-2 complex subunit alpha-1 (1012 aa).

HEAT repeat units lie at residues 254–289 (AMRALQYFPTIEDPSTRKALFEVLQRILMGTDVVKN), 354–391 (DIIKKHQSQIITSLKDPDISIRRRALDLLYGMCDVSNA), 393–430 (DIVEELLQYLSTAEFSMREELSLKAAILAEKFAPDLSW), and 525–565 (PTIP…CIDV). Residues 652–678 (STDPESVARSLSHPNGTLSNIDPQTPS) are disordered. The segment covering 663 to 675 (SHPNGTLSNIDPQ) has biased composition (polar residues). The region spanning 742–841 (ALCLKDSGVL…LDFSYKFGAN (100 aa)) is the GAE domain.

It belongs to the adaptor complexes large subunit family. As to quaternary structure, adaptor protein complex 2 (AP-2) is a heterotetramer composed of two large adaptins (alpha-type and beta-type subunits), a medium adaptin (mu-type subunit) and a small adaptin (sigma-type subunit). Binds to EPSIN2.

It localises to the membrane. It is found in the coated pit. Functionally, subunit of the adaptor protein complex 2 (AP-2). Adaptor protein complexes function in protein transport via transport vesicles in different membrane traffic pathways. Adaptor protein complexes are vesicle coat components and appear to be involved in cargo selection and vesicle formation. AP-2 is involved in clathrin-dependent endocytosis in which cargo proteins are incorporated into vesicles surrounded by clathrin (clathrin-coated vesicles, CCVs) which are destined for fusion with the early endosome. The complex binds polyphosphoinositides. This Arabidopsis thaliana (Mouse-ear cress) protein is AP-2 complex subunit alpha-1 (ALPHA-ADR).